The following is an 800-amino-acid chain: DNA topoisomerase 1 (800 aa).

One can recognise a Toprim domain in the interval M1–V111. The Mg(2+) site is built by E7 and D80. Residues D132–E568 form the Topo IA-type catalytic domain. The segment at S166–Q171 is interaction with DNA. The active-site O-(5'-phospho-DNA)-tyrosine intermediate is Y304. Residues C600 to C627 form a C4-type zinc finger.

The protein belongs to the type IA topoisomerase family. Monomer. Mg(2+) is required as a cofactor.

It carries out the reaction ATP-independent breakage of single-stranded DNA, followed by passage and rejoining.. Functionally, releases the supercoiling and torsional tension of DNA, which is introduced during the DNA replication and transcription, by transiently cleaving and rejoining one strand of the DNA duplex. Introduces a single-strand break via transesterification at a target site in duplex DNA. The scissile phosphodiester is attacked by the catalytic tyrosine of the enzyme, resulting in the formation of a DNA-(5'-phosphotyrosyl)-enzyme intermediate and the expulsion of a 3'-OH DNA strand. The free DNA strand then undergoes passage around the unbroken strand, thus removing DNA supercoils. Finally, in the religation step, the DNA 3'-OH attacks the covalent intermediate to expel the active-site tyrosine and restore the DNA phosphodiester backbone. This chain is DNA topoisomerase 1, found in Rickettsia bellii (strain RML369-C).